The chain runs to 135 residues: Large ribosomal subunit protein uL16c (135 aa).

This sequence belongs to the universal ribosomal protein uL16 family. Part of the 50S ribosomal subunit.

It localises to the plastid. Its subcellular location is the chloroplast. The polypeptide is Large ribosomal subunit protein uL16c (Vitis vinifera (Grape)).